The primary structure comprises 504 residues: L-carnitine/gamma-butyrobetaine antiporter (504 aa).

A run of 12 helical transmembrane segments spans residues 10–30 (IEPK…WLTV), 51–71 (WGWA…WLVF), 92–112 (IFMM…SIEI), 143–163 (GPLP…FFFV), 195–215 (FYLV…TPLV), 231–251 (LDAI…ACGL), 263–283 (SYLS…SFIM), 316–336 (WTVF…IFLA), 347–367 (LCFG…TVLG), 398–418 (WAAL…CFIA), 446–466 (LLVR…LLAL), and 475–495 (AIIA…LSFI).

This sequence belongs to the BCCT transporter (TC 2.A.15) family. CaiT subfamily. In terms of assembly, homotrimer.

It is found in the cell inner membrane. The enzyme catalyses 4-(trimethylamino)butanoate(in) + (R)-carnitine(out) = 4-(trimethylamino)butanoate(out) + (R)-carnitine(in). Its pathway is amine and polyamine metabolism; carnitine metabolism. Functionally, catalyzes the exchange of L-carnitine for gamma-butyrobetaine. The polypeptide is L-carnitine/gamma-butyrobetaine antiporter (Escherichia coli O81 (strain ED1a)).